A 121-amino-acid polypeptide reads, in one-letter code: Spermidine export protein MdtJ (121 aa).

Met1 is a topological domain (cytoplasmic). Residues Tyr2 to Met22 form a helical membrane-spanning segment. At Lys23–Asn31 the chain is on the periplasmic side. A helical transmembrane segment spans residues Gly32–Val52. The Cytoplasmic segment spans residues Lys53 to Lys54. The chain crosses the membrane as a helical span at residues Ile55 to Phe75. At Ser76–Asp81 the chain is on the periplasmic side. A helical transmembrane segment spans residues Glu82–Ile102. Residues Lys103–Val121 lie on the Cytoplasmic side of the membrane.

Belongs to the drug/metabolite transporter (DMT) superfamily. Small multidrug resistance (SMR) (TC 2.A.7.1) family. MdtJ subfamily. As to quaternary structure, forms a complex with MdtI.

The protein resides in the cell inner membrane. In terms of biological role, catalyzes the excretion of spermidine. The sequence is that of Spermidine export protein MdtJ (mdtJ) from Escherichia coli O6:H1 (strain CFT073 / ATCC 700928 / UPEC).